Here is a 199-residue protein sequence, read N- to C-terminus: MVNYPHNLIRQKVSSVQKQNKVDFANRGMSFEAAINATNDYYLSRQIAVIHKKPTPVQIVKVDYPKRSRAKIVEAYFRQASTTDYCGVYKGHYVDFEAKETRQKTAMPMKNFHLHQIEHMACVLHQKGICFVLLHFSTLKETYYLPAQALISFYQIDNGSKSMPIDYIRKNGFKVAFGAFPQVPYLNIIEQNFLGGDYN.

4 residues coordinate Mg(2+): Thr-82, Asp-84, Glu-97, and Gln-116.

The protein belongs to the RecU family. Requires Mg(2+) as cofactor.

The protein resides in the cytoplasm. The catalysed reaction is Endonucleolytic cleavage at a junction such as a reciprocal single-stranded crossover between two homologous DNA duplexes (Holliday junction).. In terms of biological role, endonuclease that resolves Holliday junction intermediates in genetic recombination. Cleaves mobile four-strand junctions by introducing symmetrical nicks in paired strands. Promotes annealing of linear ssDNA with homologous dsDNA. Required for DNA repair, homologous recombination and chromosome segregation. This Streptococcus pyogenes serotype M1 protein is Holliday junction resolvase RecU.